The chain runs to 432 residues: 3-phosphoshikimate 1-carboxyvinyltransferase (432 aa).

3-phosphoshikimate-binding residues include Lys21, Ser22, and Arg26. Lys21 is a binding site for phosphoenolpyruvate. Residues Gly94 and Arg122 each contribute to the phosphoenolpyruvate site. Ser168, Gln170, Asp317, and Lys344 together coordinate 3-phosphoshikimate. Gln170 serves as a coordination point for phosphoenolpyruvate. The active-site Proton acceptor is the Asp317. Phosphoenolpyruvate-binding residues include Arg348 and Arg391.

It belongs to the EPSP synthase family. As to quaternary structure, monomer.

It localises to the cytoplasm. The enzyme catalyses 3-phosphoshikimate + phosphoenolpyruvate = 5-O-(1-carboxyvinyl)-3-phosphoshikimate + phosphate. It participates in metabolic intermediate biosynthesis; chorismate biosynthesis; chorismate from D-erythrose 4-phosphate and phosphoenolpyruvate: step 6/7. Its function is as follows. Catalyzes the transfer of the enolpyruvyl moiety of phosphoenolpyruvate (PEP) to the 5-hydroxyl of shikimate-3-phosphate (S3P) to produce enolpyruvyl shikimate-3-phosphate and inorganic phosphate. The polypeptide is 3-phosphoshikimate 1-carboxyvinyltransferase (Petrotoga mobilis (strain DSM 10674 / SJ95)).